The sequence spans 491 residues: Nicotinamide phosphoribosyltransferase (491 aa).

Met1 carries the post-translational modification N-acetylmethionine. Tyr188 carries the phosphotyrosine modification. Diphosphate is bound at residue Arg196. Asp219 provides a ligand contact to beta-nicotinamide D-ribonucleotide. Positions 247 and 311 each coordinate diphosphate. Beta-nicotinamide D-ribonucleotide is bound by residues 311 to 313 (RPD), 353 to 354 (GD), Gly384, and Arg392. Ser472 is subject to Phosphoserine.

Belongs to the NAPRTase family. Homodimer. Ubiquitously expressed in lymphoid and non-lymphoid tissues.

Its subcellular location is the nucleus. The protein localises to the cytoplasm. It localises to the secreted. The enzyme catalyses beta-nicotinamide D-ribonucleotide + diphosphate = 5-phospho-alpha-D-ribose 1-diphosphate + nicotinamide + H(+). It participates in cofactor biosynthesis; NAD(+) biosynthesis; nicotinamide D-ribonucleotide from 5-phospho-alpha-D-ribose 1-diphosphate and nicotinamide: step 1/1. Functionally, the secreted form behaves both as a cytokine with immunomodulating properties and an adipokine with anti-diabetic properties, it has no enzymatic activity, partly because of lack of activation by ATP, which has a low level in extracellular space and plasma. Catalyzes the condensation of nicotinamide with 5-phosphoribosyl-1-pyrophosphate to yield nicotinamide mononucleotide, an intermediate in the biosynthesis of NAD. It is the rate limiting component in the mammalian NAD biosynthesis pathway. Plays a role in the modulation of circadian clock function. NAMPT-dependent oscillatory production of NAD regulates oscillation of clock target gene expression by releasing the core clock component: CLOCK-BMAL1 heterodimer from NAD-dependent SIRT1-mediated suppression. The polypeptide is Nicotinamide phosphoribosyltransferase (Nampt) (Mus musculus (Mouse)).